The primary structure comprises 101 residues: Small ribosomal subunit protein uS14 (101 aa).

It belongs to the universal ribosomal protein uS14 family. In terms of assembly, part of the 30S ribosomal subunit. Contacts proteins S3 and S10.

In terms of biological role, binds 16S rRNA, required for the assembly of 30S particles and may also be responsible for determining the conformation of the 16S rRNA at the A site. The protein is Small ribosomal subunit protein uS14 of Actinobacillus pleuropneumoniae serotype 5b (strain L20).